The sequence spans 134 residues: ATP synthase epsilon chain (134 aa).

This sequence belongs to the ATPase epsilon chain family. F-type ATPases have 2 components, CF(1) - the catalytic core - and CF(0) - the membrane proton channel. CF(1) has five subunits: alpha(3), beta(3), gamma(1), delta(1), epsilon(1). CF(0) has three main subunits: a, b and c.

It localises to the cellular thylakoid membrane. Its function is as follows. Produces ATP from ADP in the presence of a proton gradient across the membrane. This Prochlorococcus marinus (strain MIT 9215) protein is ATP synthase epsilon chain.